Here is a 258-residue protein sequence, read N- to C-terminus: Acyl-[acyl-carrier-protein]--UDP-N-acetylglucosamine O-acyltransferase (258 aa).

This sequence belongs to the transferase hexapeptide repeat family. LpxA subfamily. In terms of assembly, homotrimer.

It is found in the cytoplasm. It catalyses the reaction a (3R)-hydroxyacyl-[ACP] + UDP-N-acetyl-alpha-D-glucosamine = a UDP-3-O-[(3R)-3-hydroxyacyl]-N-acetyl-alpha-D-glucosamine + holo-[ACP]. It participates in glycolipid biosynthesis; lipid IV(A) biosynthesis; lipid IV(A) from (3R)-3-hydroxytetradecanoyl-[acyl-carrier-protein] and UDP-N-acetyl-alpha-D-glucosamine: step 1/6. Involved in the biosynthesis of lipid A, a phosphorylated glycolipid that anchors the lipopolysaccharide to the outer membrane of the cell. The polypeptide is Acyl-[acyl-carrier-protein]--UDP-N-acetylglucosamine O-acyltransferase (Neisseria meningitidis serogroup B (strain ATCC BAA-335 / MC58)).